We begin with the raw amino-acid sequence, 75 residues long: UPF0352 protein KPN78578_25810 (75 aa).

It belongs to the UPF0352 family.

The protein is UPF0352 protein KPN78578_25810 of Klebsiella pneumoniae subsp. pneumoniae (strain ATCC 700721 / MGH 78578).